Consider the following 193-residue polypeptide: Potassium-transporting ATPase KdpC subunit (193 aa).

A helical membrane pass occupies residues 7–27 (PLVVLFVVLNAVTGLAYPAVM).

This sequence belongs to the KdpC family. As to quaternary structure, the system is composed of three essential subunits: KdpA, KdpB and KdpC.

It localises to the cell inner membrane. Part of the high-affinity ATP-driven potassium transport (or Kdp) system, which catalyzes the hydrolysis of ATP coupled with the electrogenic transport of potassium into the cytoplasm. This subunit acts as a catalytic chaperone that increases the ATP-binding affinity of the ATP-hydrolyzing subunit KdpB by the formation of a transient KdpB/KdpC/ATP ternary complex. This chain is Potassium-transporting ATPase KdpC subunit, found in Burkholderia cenocepacia (strain HI2424).